Reading from the N-terminus, the 287-residue chain is uncharacterized protein (287 aa).

Positions 1–44 (MAAPRNLTGDGGARQLVKDEESPAASSAAKGLLNDDSPTGKRTK) are disordered. S37 bears the Phosphoserine mark. 5 helical membrane passes run 55–75 (FAVFFTVFLVFTTGLFCIYLT), 124–144 (TFMIPGTIFMSLLAGALFGVV), 147–167 (FVLVVLNATAGACSCFFLSKL), 218–238 (PIVDIPFHVFFLATLVGLMPA), and 260–280 (DFKTLSVLFLIGSISIFPALL).

It localises to the membrane. This is an uncharacterized protein from Arabidopsis thaliana (Mouse-ear cress).